The following is a 442-amino-acid chain: 3-phosphoshikimate 1-carboxyvinyltransferase (442 aa).

Positions 23, 24, and 28 each coordinate 3-phosphoshikimate. K23 is a phosphoenolpyruvate binding site. 2 residues coordinate phosphoenolpyruvate: G95 and R123. Residues S167, Q169, D315, and K342 each coordinate 3-phosphoshikimate. Q169 is a phosphoenolpyruvate binding site. D315 (proton acceptor) is an active-site residue. Residues R346 and R390 each contribute to the phosphoenolpyruvate site.

This sequence belongs to the EPSP synthase family. In terms of assembly, monomer.

The protein resides in the cytoplasm. It catalyses the reaction 3-phosphoshikimate + phosphoenolpyruvate = 5-O-(1-carboxyvinyl)-3-phosphoshikimate + phosphate. It functions in the pathway metabolic intermediate biosynthesis; chorismate biosynthesis; chorismate from D-erythrose 4-phosphate and phosphoenolpyruvate: step 6/7. Catalyzes the transfer of the enolpyruvyl moiety of phosphoenolpyruvate (PEP) to the 5-hydroxyl of shikimate-3-phosphate (S3P) to produce enolpyruvyl shikimate-3-phosphate and inorganic phosphate. The polypeptide is 3-phosphoshikimate 1-carboxyvinyltransferase (Dichelobacter nodosus (strain VCS1703A)).